The primary structure comprises 394 residues: NAD(P)H-quinone oxidoreductase subunit H (394 aa).

The protein belongs to the complex I 49 kDa subunit family. As to quaternary structure, NDH-1 can be composed of about 15 different subunits; different subcomplexes with different compositions have been identified which probably have different functions.

The protein resides in the cellular thylakoid membrane. It carries out the reaction a plastoquinone + NADH + (n+1) H(+)(in) = a plastoquinol + NAD(+) + n H(+)(out). The enzyme catalyses a plastoquinone + NADPH + (n+1) H(+)(in) = a plastoquinol + NADP(+) + n H(+)(out). Functionally, NDH-1 shuttles electrons from an unknown electron donor, via FMN and iron-sulfur (Fe-S) centers, to quinones in the respiratory and/or the photosynthetic chain. The immediate electron acceptor for the enzyme in this species is believed to be plastoquinone. Couples the redox reaction to proton translocation, and thus conserves the redox energy in a proton gradient. Cyanobacterial NDH-1 also plays a role in inorganic carbon-concentration. This Synechococcus sp. (strain ATCC 27144 / PCC 6301 / SAUG 1402/1) (Anacystis nidulans) protein is NAD(P)H-quinone oxidoreductase subunit H.